The chain runs to 450 residues: Tubulin alpha-1 chain (450 aa).

Gln11 is a GTP binding site. At Lys40 the chain carries N6-acetyllysine. The GTP site is built by Glu71, Ser140, Gly144, Thr145, Thr179, Asn206, and Asn228. Residue Glu71 participates in Mg(2+) binding. Glu254 is an active-site residue.

Belongs to the tubulin family. In terms of assembly, dimer of alpha and beta chains. A typical microtubule is a hollow water-filled tube with an outer diameter of 25 nm and an inner diameter of 15 nM. Alpha-beta heterodimers associate head-to-tail to form protofilaments running lengthwise along the microtubule wall with the beta-tubulin subunit facing the microtubule plus end conferring a structural polarity. Microtubules usually have 13 protofilaments but different protofilament numbers can be found in some organisms and specialized cells. Interacts with Ote. Requires Mg(2+) as cofactor. In terms of processing, undergoes a tyrosination/detyrosination cycle, the cyclic removal and re-addition of a C-terminal tyrosine residue by the enzymes tubulin tyrosine carboxypeptidase (TTCP) and tubulin tyrosine ligase (TTL), respectively. Acetylation of alpha chains at Lys-40 stabilizes microtubules and affects affinity and processivity of microtubule motors. This modification has a role in multiple cellular functions, ranging from cell motility, cell cycle progression or cell differentiation to intracellular trafficking and signaling. During the early stages of oogenesis lky/Alpha-tubulin N-acetyltransferase 2 is the main acetyltransferase responsible for Lys-40 acetylation in germline cells while Atat/alpha-tubulin N-acetyltransferase 1 is the main acetyltransferase responsible for Lys-40 acetylation in somatic cells.

The protein localises to the cytoplasm. Its subcellular location is the cytoskeleton. It catalyses the reaction GTP + H2O = GDP + phosphate + H(+). Functionally, tubulin is the major constituent of microtubules, a cylinder consisting of laterally associated linear protofilaments composed of alpha- and beta-tubulin heterodimers. Microtubules grow by the addition of GTP-tubulin dimers to the microtubule end, where a stabilizing cap forms. Below the cap, tubulin dimers are in GDP-bound state, owing to GTPase activity of alpha-tubulin. The protein is Tubulin alpha-1 chain (alphaTub84B) of Drosophila melanogaster (Fruit fly).